Here is a 184-residue protein sequence, read N- to C-terminus: Ribosome-recycling factor (184 aa).

The protein belongs to the RRF family.

Its subcellular location is the cytoplasm. In terms of biological role, responsible for the release of ribosomes from messenger RNA at the termination of protein biosynthesis. May increase the efficiency of translation by recycling ribosomes from one round of translation to another. In Natranaerobius thermophilus (strain ATCC BAA-1301 / DSM 18059 / JW/NM-WN-LF), this protein is Ribosome-recycling factor.